Reading from the N-terminus, the 707-residue chain is MPYLDHAGSTLPSKTQLEELAKLQTQLILANPHSHHSTAIKTQQIVSSARHRILRYFNTTADDYFVVFTNNTTHALKIVAENFNFGHRTQEGVVSEISAVLKGGPSNFAYFNDSHHSVVGLRHVVLGKVDAISCVNEDVVKEECIPKVENSLFVFTAMSNFLIPFQINEKLISGWSVCVDAAALVSGTRLDLTAHRPNFVAFSFYKIFGYPTGIGALLVKKDSSKSIEKTSFAGGTVQSVDEMTMHFVIRDFERAYEEGTINSYGIAQLQKGFEEIERCGGMQAIRAHTYDLRSKAVQILQSKTHPNGKKVVEIYSQPHIQVSPETQGAIVAFNLVRPDNGYYGYTEVEKMCAIFGIELRTGCFCNIGACKKYLGITSEMIKENMSKGKRCGDEIDLINGRPTGAVRISFGRMSTEQDIEVLKQMIDTCFVSSEKVFSPSLQSLKIDSFLPTVVNLFSFPIKSVGSVAKSRYELTPRGFKHDREFLVVKDDVTLNLKMHPELCRLTATIVNDEELHIQTFDQNDNLVIPMSLSLKENDAKVVCKKTIATFDCGDKVGQWLENALDMTNCRLLRVAGESKKNFVNDSPFLLINEASVYMLARHIDMDVQDILTRFRSNIVVRGLPPFIEDTAKRLSIENLEFEVVDKCTRCEMICVDPMTGEKDPSLLLALRDYRNKQKMTFGIYIRQSNFEPGQFVEAGSAVRFFTD.

K206 carries the post-translational modification N6-(pyridoxal phosphate)lysine. The active site involves C365. Residues 558-705 enclose the MOSC domain; it reads QWLENALDMT…VEAGSAVRFF (148 aa).

Belongs to the class-V pyridoxal-phosphate-dependent aminotransferase family. MOCOS subfamily. Requires pyridoxal 5'-phosphate as cofactor.

The enzyme catalyses Mo-molybdopterin + L-cysteine + AH2 = thio-Mo-molybdopterin + L-alanine + A + H2O. Its pathway is cofactor biosynthesis; molybdopterin biosynthesis. Sulfurates the molybdenum cofactor. Sulfation of molybdenum is essential for xanthine dehydrogenase (XDH) and aldehyde oxidase (ADO) enzymes in which molybdenum cofactor is liganded by 1 oxygen and 1 sulfur atom in active form. The polypeptide is Molybdenum cofactor sulfurase (mocs-1) (Caenorhabditis briggsae).